The sequence spans 127 residues: Gamma-synuclein (127 aa).

2 consecutive repeat copies span residues 20–30 and 31–41. The tract at residues 20–67 is 4 X 11 AA tandem repeats of [EGSA]-K-T-K-[EQ]-[GQ]-V-X(4); sequence EKTKQGVTEAAEKTKEGVMYVGAKTKENVVQSVTSVAEKTKEQANAVS. One copy of the 3; approximate repeat lies at 42–56; the sequence is AKTKENVVQSVTSVA. Repeat unit 4 spans residues 57–67; it reads EKTKEQANAVS. 2 positions are modified to phosphoserine: Ser-67 and Ser-72. The interval 96–127 is disordered; the sequence is RKEDLRPSAPQQEGEASKEKEEVAEEAQSGGD. A Phosphoserine; by BARK1, CaMK2 and CK2 modification is found at Ser-124.

It belongs to the synuclein family. In terms of assembly, may be a centrosome-associated protein. Interacts with MYOC; affects its secretion and its aggregation. Phosphorylated. Phosphorylation by GRK5 appears to occur on residues distinct from the residue phosphorylated by other kinases. As to expression, highly expressed in brain, particularly in the substantia nigra. Also expressed in the corpus callosum, heart, skeletal muscle, ovary, testis, colon and spleen. Weak expression in pancreas, kidney and lung.

The protein localises to the cytoplasm. It is found in the perinuclear region. It localises to the cytoskeleton. Its subcellular location is the microtubule organizing center. The protein resides in the centrosome. The protein localises to the spindle. Functionally, plays a role in neurofilament network integrity. May be involved in modulating axonal architecture during development and in the adult. In vitro, increases the susceptibility of neurofilament-H to calcium-dependent proteases. May also function in modulating the keratin network in skin. Activates the MAPK and Elk-1 signal transduction pathway. This chain is Gamma-synuclein (SNCG), found in Homo sapiens (Human).